Consider the following 735-residue polypeptide: Ribosomal protein S6 kinase alpha-1 (735 aa).

At serine 54 the chain carries Phosphoserine. In terms of domain architecture, Protein kinase 1 spans 62–321 (FELLKVLGQG…AEEIKRHIFY (260 aa)). Residues 68-76 (LGQGSFGKV) and lysine 94 each bind ATP. The active-site Proton acceptor is aspartate 187. Residue serine 221 is modified to Phosphoserine; by PDPK1. Serine 307 carries the phosphoserine modification. An AGC-kinase C-terminal domain is found at 322–391 (STIDWNKLYR…VATGLMEDDS (70 aa)). Threonine 359 is modified (phosphothreonine). Phosphoserine is present on serine 363. 2 positions are modified to phosphoserine; by autocatalysis: serine 369 and serine 380. A Protein kinase 2 domain is found at 418–675 (YIVKETIGVG…AKQVLQHPWI (258 aa)). ATP is bound by residues 424–432 (IGVGSYSVC) and lysine 447. The active-site Proton acceptor is aspartate 535. Threonine 573 is modified (phosphothreonine). Serine 732 bears the Phosphoserine mark.

Belongs to the protein kinase superfamily. AGC Ser/Thr protein kinase family. S6 kinase subfamily. As to quaternary structure, forms a complex with either MAPK1/ERK2 or MAPK3/ERK1 in quiescent cells. Transiently dissociates following mitogenic stimulation. Interacts with ETV1/ER81 and FGFR1. Requires Mg(2+) as cofactor. Post-translationally, activated by phosphorylation at Ser-221 by PDPK1. Autophosphorylated on Ser-380, as part of the activation process. May be phosphorylated at Thr-359 and Ser-363 by MAPK1/ERK2 and MAPK3/ERK1. In terms of processing, N-terminal myristoylation results in an activated kinase in the absence of added growth factors.

It is found in the nucleus. The protein localises to the cytoplasm. The enzyme catalyses L-seryl-[protein] + ATP = O-phospho-L-seryl-[protein] + ADP + H(+). The catalysed reaction is L-threonyl-[protein] + ATP = O-phospho-L-threonyl-[protein] + ADP + H(+). Its activity is regulated as follows. Upon extracellular signal or mitogen stimulation, phosphorylated at Thr-573 in the C-terminal kinase domain (CTKD) by MAPK1/ERK2 and MAPK3/ERK1. The activated CTKD then autophosphorylates Ser-380, allowing binding of PDPK1, which in turn phosphorylates Ser-221 in the N-terminal kinase domain (NTDK) leading to the full activation of the protein and subsequent phosphorylation of the substrates by the NTKD. Its function is as follows. Serine/threonine-protein kinase that acts downstream of ERK (MAPK1/ERK2 and MAPK3/ERK1) signaling and mediates mitogenic and stress-induced activation of the transcription factors CREB1, ETV1/ER81 and NR4A1/NUR77, regulates translation through RPS6 and EIF4B phosphorylation, and mediates cellular proliferation, survival, and differentiation by modulating mTOR signaling and repressing pro-apoptotic function of BAD and DAPK1. In fibroblast, is required for EGF-stimulated phosphorylation of CREB1, which results in the subsequent transcriptional activation of several immediate-early genes. In response to mitogenic stimulation (EGF and PMA), phosphorylates and activates NR4A1/NUR77 and ETV1/ER81 transcription factors and the cofactor CREBBP. Upon insulin-derived signal, acts indirectly on the transcription regulation of several genes by phosphorylating GSK3B at 'Ser-9' and inhibiting its activity. Phosphorylates RPS6 in response to serum or EGF via an mTOR-independent mechanism and promotes translation initiation by facilitating assembly of the pre-initiation complex. In response to insulin, phosphorylates EIF4B, enhancing EIF4B affinity for the EIF3 complex and stimulating cap-dependent translation. Is involved in the mTOR nutrient-sensing pathway by directly phosphorylating TSC2 at 'Ser-1798', which potently inhibits TSC2 ability to suppress mTOR signaling, and mediates phosphorylation of RPTOR, which regulates mTORC1 activity and may promote rapamycin-sensitive signaling independently of the PI3K/AKT pathway. Also involved in feedback regulation of mTORC1 and mTORC2 by phosphorylating DEPTOR. Mediates cell survival by phosphorylating the pro-apoptotic proteins BAD and DAPK1 and suppressing their pro-apoptotic function. Promotes the survival of hepatic stellate cells by phosphorylating CEBPB in response to the hepatotoxin carbon tetrachloride (CCl4). Mediates induction of hepatocyte prolifration by TGFA through phosphorylation of CEBPB. Is involved in cell cycle regulation by phosphorylating the CDK inhibitor CDKN1B, which promotes CDKN1B association with 14-3-3 proteins and prevents its translocation to the nucleus and inhibition of G1 progression. Phosphorylates EPHA2 at 'Ser-897', the RPS6KA-EPHA2 signaling pathway controls cell migration. In response to mTORC1 activation, phosphorylates EIF4B at 'Ser-406' and 'Ser-422' which stimulates bicarbonate cotransporter SLC4A7 mRNA translation, increasing SLC4A7 protein abundance and function. This Rattus norvegicus (Rat) protein is Ribosomal protein S6 kinase alpha-1 (Rps6ka1).